A 393-amino-acid polypeptide reads, in one-letter code: S-adenosylmethionine synthase 2 (393 aa).

Mg(2+) is bound at residue glutamate 9. An ATP-binding site is contributed by histidine 15. K(+) is bound at residue glutamate 43. The L-methionine site is built by glutamate 56 and glutamine 99. ATP is bound by residues 167 to 169 (DGK), 235 to 238 (SGRF), aspartate 246, 252 to 253 (RK), alanine 269, lysine 273, and lysine 277. Aspartate 246 provides a ligand contact to L-methionine. Lysine 277 contacts L-methionine.

Belongs to the AdoMet synthase family. In terms of assembly, homotetramer. The cofactor is Mn(2+). Mg(2+) is required as a cofactor. Requires Co(2+) as cofactor. K(+) serves as cofactor. Mostly expressed in flowers, seedpods and roots, and, to a lower extent, in stems and leaves.

The protein localises to the cytoplasm. The enzyme catalyses L-methionine + ATP + H2O = S-adenosyl-L-methionine + phosphate + diphosphate. It participates in amino-acid biosynthesis; S-adenosyl-L-methionine biosynthesis; S-adenosyl-L-methionine from L-methionine: step 1/1. Functionally, catalyzes the formation of S-adenosylmethionine from methionine and ATP. The reaction comprises two steps that are both catalyzed by the same enzyme: formation of S-adenosylmethionine (AdoMet) and triphosphate, and subsequent hydrolysis of the triphosphate. This Brassica juncea (Indian mustard) protein is S-adenosylmethionine synthase 2 (MSAMS2).